Here is a 152-residue protein sequence, read N- to C-terminus: Superoxide dismutase [Cu-Zn] (152 aa).

Positions 45, 47, and 62 each coordinate Cu cation. A disulfide bond links Cys56 and Cys145. Positions 62, 70, 79, and 82 each coordinate Zn(2+). His119 is a binding site for Cu cation.

This sequence belongs to the Cu-Zn superoxide dismutase family. In terms of assembly, homodimer. Requires Cu cation as cofactor. Zn(2+) is required as a cofactor.

It is found in the cytoplasm. It catalyses the reaction 2 superoxide + 2 H(+) = H2O2 + O2. Its function is as follows. Destroys radicals which are normally produced within the cells and which are toxic to biological systems. This chain is Superoxide dismutase [Cu-Zn] (SODCC), found in Spinacia oleracea (Spinach).